We begin with the raw amino-acid sequence, 100 residues long: Urease subunit gamma (100 aa).

This sequence belongs to the urease gamma subunit family. In terms of assembly, heterotrimer of UreA (gamma), UreB (beta) and UreC (alpha) subunits. Three heterotrimers associate to form the active enzyme.

It is found in the cytoplasm. It catalyses the reaction urea + 2 H2O + H(+) = hydrogencarbonate + 2 NH4(+). It functions in the pathway nitrogen metabolism; urea degradation; CO(2) and NH(3) from urea (urease route): step 1/1. This chain is Urease subunit gamma, found in Trichormus variabilis (strain ATCC 29413 / PCC 7937) (Anabaena variabilis).